The sequence spans 365 residues: MALLLCFVLLCGVADFTSSLSITTPEQRIEKAKGETAYLPCKFTLEPEDQGPLDIEWLISPSDNQKVDQVIILYSGDKIYDNYYPDLKGRVHFTSNDVKSGDASINVTNLQLSDIGTYQCKVKKAPGVANRKFLLTVLVKPSGTRCFVDGSGEIGNDFKLKCEPKEGSLPLQYEWQKLSDSQKMPTPWLAEMTSPVISVKNASSEYSGTYSCTVQNRVGSDQCMLRLDVVPPSNRAGTIAGAVIGTLLALVLIGAILFCCHKKRREEKYEKEVHHDIREDVPPPKSRTSTARSYIGSNHSSLGSMSPSNMEGYSKTQYNQVPSEDFERAPQSPTLAPAKVAAPNLSRMGAVPVMIPAQSKDGSIV.

A signal peptide spans 1–19; the sequence is MALLLCFVLLCGVADFTSS. 2 Ig-like C2-type domains span residues 20-136 and 141-228; these read LSIT…FLLT and PSGT…LRLD. The Extracellular segment spans residues 20–238; the sequence is LSITTPEQRI…VVPPSNRAGT (219 aa). 3 disulfides stabilise this stretch: cysteine 41–cysteine 120, cysteine 146–cysteine 223, and cysteine 162–cysteine 212. N-linked (GlcNAc...) asparagine glycosylation is present at asparagine 106. Residues 239–259 form a helical membrane-spanning segment; that stretch reads IAGAVIGTLLALVLIGAILFC. Residues cysteine 259 and cysteine 260 are each lipidated (S-palmitoyl cysteine). Residues 260–365 lie on the Cytoplasmic side of the membrane; that stretch reads CHKKRREEKY…PAQSKDGSIV (106 aa). The span at 269 to 282 shows a compositional bias: basic and acidic residues; sequence YEKEVHHDIREDVP. The interval 269–315 is disordered; the sequence is YEKEVHHDIREDVPPPKSRTSTARSYIGSNHSSLGSMSPSNMEGYSK. Positions 286–315 are enriched in polar residues; that stretch reads SRTSTARSYIGSNHSSLGSMSPSNMEGYSK. Residues serine 297, serine 304, serine 306, serine 323, serine 332, and serine 363 each carry the phosphoserine modification. The short motif at 360-365 is the PDZ-binding element; it reads KDGSIV.

In terms of assembly, monomer. May form homodimer. Interacts with LNX, MAGI1, DLG4, PRKCABP, TJP1 and CTNNB1. Interacts with MPDZ; recruits MPDZ to intercellular contact sites. Interacts with JAML (homodimeric form). In terms of processing, N-glycosylated. Post-translationally, palmitoylated on Cys-259 and/or Cys-260; required for proper localization to the plasma membrane. Expressed in heart, brain, spleen, lung, liver, muscle, kidney, testis, spleen and skeletal muscle.

The protein resides in the cell membrane. The protein localises to the basolateral cell membrane. It is found in the cell junction. Its subcellular location is the tight junction. It localises to the adherens junction. Functionally, component of the epithelial apical junction complex that may function as a homophilic cell adhesion molecule and is essential for tight junction integrity. Also involved in transepithelial migration of leukocytes through adhesive interactions with JAML a transmembrane protein of the plasma membrane of leukocytes. The interaction between both receptors also mediates the activation of gamma-delta T-cells, a subpopulation of T-cells residing in epithelia and involved in tissue homeostasis and repair. Upon epithelial CXADR-binding, JAML induces downstream cell signaling events in gamma-delta T-cells through PI3-kinase and MAP kinases. It results in proliferation and production of cytokines and growth factors by T-cells that in turn stimulate epithelial tissues repair. The polypeptide is Coxsackievirus and adenovirus receptor homolog (Cxadr) (Rattus norvegicus (Rat)).